A 373-amino-acid polypeptide reads, in one-letter code: Dual-specificity RNA methyltransferase RlmN (373 aa).

The active-site Proton acceptor is the Glu94. The region spanning 100–339 is the Radical SAM core domain; sequence EDDRATLCVS…VIVRKTRGDD (240 aa). Cys107 and Cys344 are joined by a disulfide. Residues Cys114, Cys118, and Cys121 each contribute to the [4Fe-4S] cluster site. S-adenosyl-L-methionine is bound by residues 168–169, Ser200, 222–224, and Asn301; these read GE and SIH. Cys344 (S-methylcysteine intermediate) is an active-site residue.

The protein belongs to the radical SAM superfamily. RlmN family. It depends on [4Fe-4S] cluster as a cofactor.

It is found in the cytoplasm. The catalysed reaction is adenosine(2503) in 23S rRNA + 2 reduced [2Fe-2S]-[ferredoxin] + 2 S-adenosyl-L-methionine = 2-methyladenosine(2503) in 23S rRNA + 5'-deoxyadenosine + L-methionine + 2 oxidized [2Fe-2S]-[ferredoxin] + S-adenosyl-L-homocysteine. It carries out the reaction adenosine(37) in tRNA + 2 reduced [2Fe-2S]-[ferredoxin] + 2 S-adenosyl-L-methionine = 2-methyladenosine(37) in tRNA + 5'-deoxyadenosine + L-methionine + 2 oxidized [2Fe-2S]-[ferredoxin] + S-adenosyl-L-homocysteine. Functionally, specifically methylates position 2 of adenine 2503 in 23S rRNA and position 2 of adenine 37 in tRNAs. m2A2503 modification seems to play a crucial role in the proofreading step occurring at the peptidyl transferase center and thus would serve to optimize ribosomal fidelity. This chain is Dual-specificity RNA methyltransferase RlmN, found in Shewanella baltica (strain OS223).